A 431-amino-acid chain; its full sequence is Isochorismate synthase MenF (431 aa).

K190 (proton acceptor) is an active-site residue. E240 functions as the Proton donor in the catalytic mechanism. The Mg(2+) site is built by E284 and E416.

Belongs to the isochorismate synthase family. Homodimer. Requires Mg(2+) as cofactor.

The enzyme catalyses chorismate = isochorismate. It functions in the pathway quinol/quinone metabolism; 1,4-dihydroxy-2-naphthoate biosynthesis; 1,4-dihydroxy-2-naphthoate from chorismate: step 1/7. The protein operates within quinol/quinone metabolism; menaquinone biosynthesis. Functionally, catalyzes the conversion of chorismate to isochorismate. Can also catalyze the reverse reaction, but with a lower efficiency. The sequence is that of Isochorismate synthase MenF from Escherichia coli (strain K12).